A 124-amino-acid chain; its full sequence is Small ribosomal subunit protein uS12 (124 aa).

Position 89 is a 3-methylthioaspartic acid (Asp-89). The interval 105 to 124 (QGVKNRKQARSRYGAKKEKS) is disordered. Positions 108–118 (KNRKQARSRYG) are enriched in basic residues.

The protein belongs to the universal ribosomal protein uS12 family. Part of the 30S ribosomal subunit. Contacts proteins S8 and S17. May interact with IF1 in the 30S initiation complex.

Its function is as follows. With S4 and S5 plays an important role in translational accuracy. Interacts with and stabilizes bases of the 16S rRNA that are involved in tRNA selection in the A site and with the mRNA backbone. Located at the interface of the 30S and 50S subunits, it traverses the body of the 30S subunit contacting proteins on the other side and probably holding the rRNA structure together. The combined cluster of proteins S8, S12 and S17 appears to hold together the shoulder and platform of the 30S subunit. In Mycobacterium avium (strain 104), this protein is Small ribosomal subunit protein uS12.